We begin with the raw amino-acid sequence, 230 residues long: Preflagellin peptidase (230 aa).

Position 1 (Met1) is a topological domain, cytoplasmic. The helical transmembrane segment at Ile2–Asp18 threads the bilayer. The Extracellular portion of the chain corresponds to Phe19–Glu23. Residues Ile24–Thr46 traverse the membrane as a helical segment. Residues Leu47 to Asp49 are Cytoplasmic-facing. The chain crosses the membrane as a helical span at residues Tyr50–Leu72. Topologically, residues Ser73 to Gly78 are extracellular. Residues Asp79–Leu89 traverse the membrane as a helical segment. The Cytoplasmic segment spans residues Val90 to Val110. The chain crosses the membrane as a helical span at residues Pro111 to Asn139. At Gly140–Pro204 the chain is on the extracellular side. The helical transmembrane segment at Leu205–Thr216 threads the bilayer. The Cytoplasmic segment spans residues Pro217–Phe230.

The protein belongs to the peptidase A24 family. Archaeal preflagellin peptidase subfamily.

Its subcellular location is the cell membrane. The enzyme catalyses Cleaves the signal peptide of 3 to 12 amino acids from the N-terminal of preflagellin, usually at Arg-Gly-|- or Lys-Gly-|-, to release flagellin.. Its function is as follows. Cleaves the N-terminal leader peptide from preflagellins. The polypeptide is Preflagellin peptidase (flaK) (Methanococcus maripaludis (strain C6 / ATCC BAA-1332)).